The sequence spans 242 residues: Uridylate kinase (242 aa).

15–18 serves as a coordination point for ATP; sequence KLSG. A UMP-binding site is contributed by Gly-57. 2 residues coordinate ATP: Gly-58 and Arg-62. Residues Asp-78 and 139–146 contribute to the UMP site; that span reads TGNPFFTT. Residues Thr-166, Tyr-172, and Asp-175 each contribute to the ATP site.

Belongs to the UMP kinase family. In terms of assembly, homohexamer.

It is found in the cytoplasm. The catalysed reaction is UMP + ATP = UDP + ADP. It participates in pyrimidine metabolism; CTP biosynthesis via de novo pathway; UDP from UMP (UMPK route): step 1/1. Its activity is regulated as follows. Inhibited by UTP. Catalyzes the reversible phosphorylation of UMP to UDP. In Acinetobacter baumannii (strain ATCC 17978 / DSM 105126 / CIP 53.77 / LMG 1025 / NCDC KC755 / 5377), this protein is Uridylate kinase.